The chain runs to 90 residues: DNA-binding protein HU-beta (90 aa).

It belongs to the bacterial histone-like protein family. As to quaternary structure, heterodimer of an alpha and a beta chain.

Its function is as follows. Histone-like DNA-binding protein which is capable of wrapping DNA to stabilize it, and thus to prevent its denaturation under extreme environmental conditions. The chain is DNA-binding protein HU-beta (hupB) from Pseudomonas fluorescens (strain ATCC BAA-477 / NRRL B-23932 / Pf-5).